Consider the following 401-residue polypeptide: Shugoshin (401 aa).

Positions 3–49 (SKVEQQYKLLNAELMDQVQKQRLEIGEYRKRVISLEREIMDIREEHV) form a coiled coil. Positions 82–197 (EPAPAAQINR…VEETQTEQNE (116 aa)) are disordered. The segment covering 98–108 (SSREICKDMRR) has biased composition (basic and acidic residues). A compositionally biased stretch (low complexity) spans 114–137 (RTTRPISPRRSSSVTSTVSSTSRR). Residues Ser-124, Ser-125, and Ser-126 each carry the phosphoserine; by AurB modification. The segment covering 171 to 183 (VFDEDDSDDDFDE) has biased composition (acidic residues). Thr-331 is modified (phosphothreonine; by PLK1). The interval 338-401 (EEMPSIRTRS…GSKGKAKAKK (64 aa)) is disordered. A compositionally biased stretch (polar residues) spans 348–377 (RTAANKKSENTDMSSSFCNNSARPSRSCRP). Over residues 387–401 (NKLRNGSKGKAKAKK) the composition is skewed to basic residues.

The protein belongs to the shugoshin family. As to quaternary structure, homodimer. Interacts with Incenp. Phosphorylation by polo-like kinase (PLK) on Thr-331 antagonizes cohesive function. Phosphorylation on Thr-331 at the metaphase anaphase transition leads to its dissociation from centromeres. In contrast, phosphorylation by aurB/ial on either Ser-124, Ser-125 or Ser-126 is required for association with centromeres.

It is found in the chromosome. Its subcellular location is the centromere. Functionally, plays a central role in chromosome cohesion during meiosis and mitosis by preventing premature dissociation of cohesin complex from centromeres after prophase, when most of cohesin complex dissociates from chromosomes arms. May act by protecting or Rad21 from cleavage by Sse/separase. Required during meiosis in both males and females. In Drosophila melanogaster (Fruit fly), this protein is Shugoshin (mei-S332).